Here is a 151-residue protein sequence, read N- to C-terminus: UPF0756 membrane protein lhv_0995 (151 aa).

5 consecutive transmembrane segments (helical) span residues 4–24 (WLFLALVLVVALVGKNMSLII), 25–45 (ATGVVMALKLIPFASKWLPVI), 52–72 (WGVTVISVAILIPVATGQIGF), 78–98 (TFKSPAGWIAILAGIAVAILS), and 115–135 (LVLGTIIGVVVFKGVAAGPVI).

The protein belongs to the UPF0756 family.

It localises to the cell membrane. The sequence is that of UPF0756 membrane protein lhv_0995 from Lactobacillus helveticus (strain DPC 4571).